Here is a 105-residue protein sequence, read N- to C-terminus: Small ribosomal subunit protein uS10 (105 aa).

This sequence belongs to the universal ribosomal protein uS10 family. Part of the 30S ribosomal subunit.

In terms of biological role, involved in the binding of tRNA to the ribosomes. The polypeptide is Small ribosomal subunit protein uS10 (Desulfotalea psychrophila (strain LSv54 / DSM 12343)).